The primary structure comprises 201 residues: Small ribosomal subunit protein uS4c (201 aa).

The segment at G20–Y44 is disordered. Residues M89–L152 form the S4 RNA-binding domain.

It belongs to the universal ribosomal protein uS4 family. As to quaternary structure, part of the 30S ribosomal subunit. Contacts protein S5. The interaction surface between S4 and S5 is involved in control of translational fidelity.

Its subcellular location is the plastid. The protein resides in the chloroplast. Functionally, one of the primary rRNA binding proteins, it binds directly to 16S rRNA where it nucleates assembly of the body of the 30S subunit. With S5 and S12 plays an important role in translational accuracy. The polypeptide is Small ribosomal subunit protein uS4c (rps4) (Arabis hirsuta (Hairy rock-cress)).